The chain runs to 396 residues: (S)-8-oxocitronellyl enol synthase ISY2 (396 aa).

NADP(+) is bound by residues 38–40 (TGL), 66–67 (RR), 84–85 (DV), 108–109 (TW), Gln146, Tyr182, Ile209, and 216–218 (SMM). Tyr182 is an active-site residue.

The protein belongs to the short-chain dehydrogenases/reductases (SDR) family.

The catalysed reaction is (S)-8-oxocitronellyl enol + NADP(+) = (6E)-8-oxogeranial + NADPH + H(+). The enzyme catalyses (S)-8-oxocitronellyl enol + NAD(+) = (6E)-8-oxogeranial + NADH + H(+). Functionally, iridoid synthase that catalyzes the first step in generation of the iridoid ring scaffold using the linear monoterpene (6E)-8-oxogeranial as substrate. Iridoids comprise a large family of distinctive bicyclic monoterpenes that possess a wide range of pharmacological activities, including anticancer, anti-inflammatory, antifungal and antibacterial activities. Catalyzes the conversion of the linear monoterpene (6E)-8-oxogeranial to (S)-8-oxocitronellyl enol, a precursor of nepetalactones, which are metabolites that are both insect-repellent and have euphoric effect in cats. In Nepeta racemosa (Catmint), this protein is (S)-8-oxocitronellyl enol synthase ISY2.